The chain runs to 494 residues: Catalase isozyme 2 (494 aa).

A disordered region spans residues 1 to 29 (MDPCKFRPSSSFDTKTTTTNAGQPVWNDN). A compositionally biased stretch (polar residues) spans 8–22 (PSSSFDTKTTTTNAG). Active-site residues include histidine 65 and asparagine 138. Tyrosine 348 provides a ligand contact to heme.

This sequence belongs to the catalase family. As to quaternary structure, homotetramer. It depends on heme as a cofactor.

It is found in the peroxisome. The protein resides in the glyoxysome. It carries out the reaction 2 H2O2 = O2 + 2 H2O. Occurs in almost all aerobically respiring organisms and serves to protect cells from the toxic effects of hydrogen peroxide. The chain is Catalase isozyme 2 (CAT2) from Hordeum vulgare (Barley).